The following is a 456-amino-acid chain: tRNA-2-methylthio-N(6)-dimethylallyladenosine synthase (456 aa).

Positions 19 to 137 constitute an MTTase N-terminal domain; it reads KHFFIETWGC…FPEYLHRVQV (119 aa). 6 residues coordinate [4Fe-4S] cluster: Cys28, Cys64, Cys98, Cys174, Cys178, and Cys181. In terms of domain architecture, Radical SAM core spans 160–392; the sequence is RKSNVKAFVT…AVNEGIVVGN (233 aa). Residues 393–456 enclose the TRAM domain; sequence KAAEGKIYEV…SFSLVGEVVE (64 aa).

Belongs to the methylthiotransferase family. MiaB subfamily. As to quaternary structure, monomer. [4Fe-4S] cluster serves as cofactor.

It is found in the cytoplasm. The catalysed reaction is N(6)-dimethylallyladenosine(37) in tRNA + (sulfur carrier)-SH + AH2 + 2 S-adenosyl-L-methionine = 2-methylsulfanyl-N(6)-dimethylallyladenosine(37) in tRNA + (sulfur carrier)-H + 5'-deoxyadenosine + L-methionine + A + S-adenosyl-L-homocysteine + 2 H(+). Functionally, catalyzes the methylthiolation of N6-(dimethylallyl)adenosine (i(6)A), leading to the formation of 2-methylthio-N6-(dimethylallyl)adenosine (ms(2)i(6)A) at position 37 in tRNAs that read codons beginning with uridine. This Clostridium botulinum (strain Eklund 17B / Type B) protein is tRNA-2-methylthio-N(6)-dimethylallyladenosine synthase.